A 56-amino-acid polypeptide reads, in one-letter code: Large ribosomal subunit protein bL33B (56 aa).

The protein belongs to the bacterial ribosomal protein bL33 family.

The polypeptide is Large ribosomal subunit protein bL33B (Cutibacterium acnes (strain DSM 16379 / KPA171202) (Propionibacterium acnes)).